Reading from the N-terminus, the 311-residue chain is Probable manganese-dependent inorganic pyrophosphatase (311 aa).

Residues His9, Asp13, Asp15, Asp77, His99, and Asp151 each coordinate Mn(2+).

Belongs to the PPase class C family. Mn(2+) serves as cofactor.

Its subcellular location is the cytoplasm. The enzyme catalyses diphosphate + H2O = 2 phosphate + H(+). This is Probable manganese-dependent inorganic pyrophosphatase from Streptococcus suis (strain 98HAH33).